The sequence spans 907 residues: Lateral signaling target protein 2 homolog (907 aa).

Disordered regions lie at residues Ser339–Asn395, Leu463–Ala604, Asn662–Ala688, Glu716–Gly756, and Gly770–Arg834. Polar residues predominate over residues Asp351 to Arg361. The span at Glu367–Pro393 shows a compositional bias: acidic residues. Polar residues-rich tracts occupy residues Leu463 to Leu475 and Pro486 to Gln495. The segment covering Ser501–Glu516 has biased composition (acidic residues). Basic residues predominate over residues His525–Ser549. The span at Ser550 to Ala565 shows a compositional bias: low complexity. Over residues Gln568–Gly580 the composition is skewed to polar residues. A compositionally biased stretch (gly residues) spans Gly592–Gly602. Residues Ala742–Ala751 are compositionally biased toward polar residues. Over residues Gly777–Ser793 the composition is skewed to low complexity. Positions Pro816 to Gln826 are enriched in polar residues. The segment at Asp845–Val905 adopts an FYVE-type zinc-finger fold. Zn(2+) is bound by residues Cys851, Cys854, Cys867, Cys870, Cys875, Cys878, Cys897, and Cys900.

This sequence belongs to the lst-2 family.

Functionally, negative regulator of epidermal growth factor receptor (EGFR) signaling. This is Lateral signaling target protein 2 homolog from Culex quinquefasciatus (Southern house mosquito).